Here is a 599-residue protein sequence, read N- to C-terminus: Elongation factor 4 (599 aa).

Positions 4 to 186 (SKIRNFSIIA…SIVEKVPAPK (183 aa)) constitute a tr-type G domain. GTP contacts are provided by residues 16–21 (DHGKST) and 133–136 (NKVD).

Belongs to the TRAFAC class translation factor GTPase superfamily. Classic translation factor GTPase family. LepA subfamily.

It localises to the cell inner membrane. The enzyme catalyses GTP + H2O = GDP + phosphate + H(+). Functionally, required for accurate and efficient protein synthesis under certain stress conditions. May act as a fidelity factor of the translation reaction, by catalyzing a one-codon backward translocation of tRNAs on improperly translocated ribosomes. Back-translocation proceeds from a post-translocation (POST) complex to a pre-translocation (PRE) complex, thus giving elongation factor G a second chance to translocate the tRNAs correctly. Binds to ribosomes in a GTP-dependent manner. This chain is Elongation factor 4, found in Syntrophotalea carbinolica (strain DSM 2380 / NBRC 103641 / GraBd1) (Pelobacter carbinolicus).